The primary structure comprises 97 residues: Small ribosomal subunit protein uS19 (97 aa).

The tract at residues 74-97 (FSPTRRFGGHPDKKAVKGKIEKQG) is disordered. Residues 82–97 (GHPDKKAVKGKIEKQG) are compositionally biased toward basic and acidic residues.

It belongs to the universal ribosomal protein uS19 family.

Protein S19 forms a complex with S13 that binds strongly to the 16S ribosomal RNA. The chain is Small ribosomal subunit protein uS19 from Petrotoga mobilis (strain DSM 10674 / SJ95).